We begin with the raw amino-acid sequence, 88 residues long: Homeobox protein knotted-1-like 11 (88 aa).

Residues 4–24 (ELKEMLLKKYSGCLSRLRSEF) enclose the ELK domain. Positions 25-88 (LKKRKKGKLP…NQRKRHWKPS (64 aa)) form a DNA-binding region, homeobox; TALE-type.

Belongs to the TALE/KNOX homeobox family.

It is found in the nucleus. In terms of biological role, probably binds to the DNA sequence 5'-TGAC-3'. In Zea mays (Maize), this protein is Homeobox protein knotted-1-like 11 (KNOX11).